The following is a 400-amino-acid chain: MAKAKYERTKPHLNIGTIGHIDHGKTTLTAAITKTLSQVGGAKATSYEEIDKAPEERERGITINTSHVEYQTETRHYAHVDCPGHADYIKNMITGAAQMDGSILVVSAADGPMPQTREHILLSRQVGVPYIVVFMNKIDMVDDPELLELVEMEVRELLSFYEFPGDDIPVLMGSALKALECGCGTRECEWCKHIWELMDAVDSYIPLPQRAVDKPFLMPIEDVFTITGRGTVTTGRVERGQVKVGDEVEIVGMREATRKTVCTGVEMFRKLLDYAEAGDNIGTLLRGVDRKEVERGMVLAKPGSIKPLTAFNAEVYVLTKEEGGRHTPFFGGYRPQFYFRTTDVTGIIQLPEGVEMVMPGDNVQMAIELITPIAIEEGLRFAIREGGRTVGAGVVTSLNE.

A tr-type G domain is found at 10–209 (KPHLNIGTIG…AVDSYIPLPQ (200 aa)). The interval 19–26 (GHIDHGKT) is G1. 19–26 (GHIDHGKT) provides a ligand contact to GTP. T26 contributes to the Mg(2+) binding site. A G2 region spans residues 60-64 (GITIN). The G3 stretch occupies residues 81–84 (DCPG). GTP-binding positions include 81-85 (DCPGH) and 136-139 (NKID). The G4 stretch occupies residues 136–139 (NKID). The interval 174–176 (SAL) is G5.

Belongs to the TRAFAC class translation factor GTPase superfamily. Classic translation factor GTPase family. EF-Tu/EF-1A subfamily. In terms of assembly, monomer.

The protein resides in the cytoplasm. It carries out the reaction GTP + H2O = GDP + phosphate + H(+). GTP hydrolase that promotes the GTP-dependent binding of aminoacyl-tRNA to the A-site of ribosomes during protein biosynthesis. The chain is Elongation factor Tu 2 from Syntrophomonas wolfei subsp. wolfei (strain DSM 2245B / Goettingen).